The primary structure comprises 518 residues: D-aminopeptidase (518 aa).

Residue Ser62 is the Nucleophile of the active site. Lys65 serves as the catalytic Proton donor/acceptor. Residues 477–487 (QRSMDAPSPGE) form an important for specificity region. Asp481 is a binding site for substrate.

The protein belongs to the peptidase S12 family. Homodimer.

It carries out the reaction Release of an N-terminal D-amino acid from a peptide, Xaa-|-Yaa-, in which Xaa is preferably D-Ala, D-Ser or D-Thr. D-amino acid amides and methyl esters also are hydrolyzed, as is glycine amide.. With respect to regulation, inhibited by beta-lactam compounds such as 6-aminopenicillic acid, 7-aminocephalosporanic acid, benzylpenicillin and ampicillin. Inhibited by p-chloromercuribenzoate. Its function is as follows. Hydrolyzes N-terminal residues in D-amino acid-containing peptides. This chain is D-aminopeptidase, found in Brucella ovis (strain ATCC 25840 / 63/290 / NCTC 10512).